Here is a 284-residue protein sequence, read N- to C-terminus: RNase adapter protein RapZ (284 aa).

Position 8–15 (8–15 (GRSGSGKS)) interacts with ATP. Residue 56 to 59 (DVRN) coordinates GTP. An RNA-binding region spans residues 266–284 (RSRGKNVQSRHRTLEKRKQ).

Belongs to the RapZ-like family. RapZ subfamily. Homotrimer.

Modulates the synthesis of GlmS, by affecting the processing and stability of the regulatory small RNA GlmZ. When glucosamine-6-phosphate (GlcN6P) concentrations are high in the cell, RapZ binds GlmZ and targets it to cleavage by RNase E. Consequently, GlmZ is inactivated and unable to activate GlmS synthesis. Under low GlcN6P concentrations, RapZ is sequestered and inactivated by an other regulatory small RNA, GlmY, preventing GlmZ degradation and leading to synthesis of GlmS. The polypeptide is RNase adapter protein RapZ (Serratia proteamaculans (strain 568)).